We begin with the raw amino-acid sequence, 1194 residues long: Multidrug efflux ATP-binding/permease protein BCG_0231 (1194 aa).

The next 6 membrane-spanning stretches (helical) occupy residues 20 to 40 (LLLG…VPLV), 56 to 76 (LAPW…LTYV), 130 to 150 (LLFD…GVAV), 153 to 173 (WLSV…GLIA), 258 to 278 (FALG…FVAF), and 279 to 299 (WACL…LTIA). Positions 21-301 (LLGFGAALAG…LAGMLTIAQQ (281 aa)) constitute an ABC transmembrane type-1 1 domain. Positions 334 to 568 (LEFQRVSFGY…CPRYRELLSP (235 aa)) constitute an ABC transporter 1 domain. An ATP-binding site is contributed by 367–374 (GAPGSGKS). 6 helical membrane-spanning segments follow: residues 628–648 (ALSL…PLLI), 660–680 (VLSA…IRWV), 743–763 (LVVA…LLAI), 765–785 (ARLV…TWQF), 847–867 (LLAL…TLVL), and 878–898 (VISV…YTPI). One can recognise an ABC transmembrane type-1 2 domain in the interval 628 to 910 (ALSLLLVAVQ…LAQMFDDYQR (283 aa)). Positions 942–1177 (VVFDAVHYSY…GGHYSRLWAA (236 aa)) constitute an ABC transporter 2 domain. An ATP-binding site is contributed by 976–983 (GSTGSGKS).

It belongs to the ABC transporter superfamily. Lipid exporter (TC 3.A.1.106) family.

Its subcellular location is the cell inner membrane. Overexpression increases resistance to chloramphenicol, ampicillin, streptomycin, tetracyclin and vancomycin. The chain is Multidrug efflux ATP-binding/permease protein BCG_0231 from Mycobacterium bovis (strain BCG / Pasteur 1173P2).